Here is a 549-residue protein sequence, read N- to C-terminus: Phosphoenolpyruvate carboxykinase (ATP) (549 aa).

Position 250–257 (250–257 (GLSGTGKT)) interacts with ATP.

The protein belongs to the phosphoenolpyruvate carboxykinase (ATP) family. As to quaternary structure, homotetramer.

It catalyses the reaction oxaloacetate + ATP = phosphoenolpyruvate + ADP + CO2. The protein operates within carbohydrate biosynthesis; gluconeogenesis. This chain is Phosphoenolpyruvate carboxykinase (ATP) (PCK1), found in Saccharomyces cerevisiae (strain ATCC 204508 / S288c) (Baker's yeast).